Here is a 314-residue protein sequence, read N- to C-terminus: Probable cell division protein WhiA (314 aa).

Residues 274-308 constitute a DNA-binding region (H-T-H motif); the sequence is SLKELGEMVSTGTISKSGVNHRLRKLNELADKIRS.

The protein belongs to the WhiA family.

Involved in cell division and chromosome segregation. The protein is Probable cell division protein WhiA of Staphylococcus carnosus (strain TM300).